Here is a 367-residue protein sequence, read N- to C-terminus: Probable peptidoglycan glycosyltransferase FtsW (367 aa).

Residues 1–8 (MRRVEGYD) are Cytoplasmic-facing. The helical transmembrane segment at 9–29 (MIVLMMAVILTCFGVVMVYSA) threads the bilayer. Topologically, residues 30–49 (SSVMAAKKFHDGFFFLKRQS) are periplasmic. A helical membrane pass occupies residues 50-70 (LYALIGFIGMGVAMHVDYHVW). The Cytoplasmic portion of the chain corresponds to 71–72 (KK). A helical membrane pass occupies residues 73 to 93 (WAVPLFLGTFFLLLLVFVPGI). Over 94–138 (GGTAKGASRWIRLPGFNFQPSELAKVALIMYMAYSLEKRQDKLKQ) the chain is Periplasmic. The helical transmembrane segment at 139-159 (FMSGFFPYMLILGVFIAVLLA) threads the bilayer. Residues 160–161 (QH) lie on the Cytoplasmic side of the membrane. The helical transmembrane segment at 162 to 182 (DMGAALTMLAVAIVMLFAAGT) threads the bilayer. Residue Lys183 is a topological domain, periplasmic. Residues 184–204 (VQYILGMGLVALPGICYLVFT) traverse the membrane as a helical segment. Residues 205-225 (KAYRMRRITAFLDPWQDPTDA) are Cytoplasmic-facing. Residues 226–246 (GFQIIQSWLALGTGGFFGQGL) form a helical membrane-spanning segment. Residues 247-266 (GEGKQKLFYLPEAHTDFILS) lie on the Periplasmic side of the membrane. Residues 267-287 (VLGEEMGFIGVVVIASMFLLL) traverse the membrane as a helical segment. At 288–304 (VQRSIRVAIAAEDSFGR) the chain is on the cytoplasmic side. The chain crosses the membrane as a helical span at residues 305–325 (FLAFGIAILLGLEAFVNMAVV). Topologically, residues 326 to 335 (TGLLPTKGIA) are periplasmic. Residues 336 to 356 (LPFLSYGGSSLIISLCSVGVL) form a helical membrane-spanning segment. Over 357 to 367 (LNVSTRMRGAA) the chain is Cytoplasmic.

The protein belongs to the SEDS family. FtsW subfamily.

Its subcellular location is the cell inner membrane. The enzyme catalyses [GlcNAc-(1-&gt;4)-Mur2Ac(oyl-L-Ala-gamma-D-Glu-L-Lys-D-Ala-D-Ala)](n)-di-trans,octa-cis-undecaprenyl diphosphate + beta-D-GlcNAc-(1-&gt;4)-Mur2Ac(oyl-L-Ala-gamma-D-Glu-L-Lys-D-Ala-D-Ala)-di-trans,octa-cis-undecaprenyl diphosphate = [GlcNAc-(1-&gt;4)-Mur2Ac(oyl-L-Ala-gamma-D-Glu-L-Lys-D-Ala-D-Ala)](n+1)-di-trans,octa-cis-undecaprenyl diphosphate + di-trans,octa-cis-undecaprenyl diphosphate + H(+). The protein operates within cell wall biogenesis; peptidoglycan biosynthesis. Functionally, peptidoglycan polymerase that is essential for cell division. The sequence is that of Probable peptidoglycan glycosyltransferase FtsW from Geobacter sp. (strain M18).